The primary structure comprises 157 residues: Protein SINE4 (157 aa).

The KASH domain maps to 104 to 157 (VTSSSDTTKAKKKTTIRRFVSVTMVLLLSWVLVVLMNHFDHLSMNTQIITLVPT). A helical membrane pass occupies residues 122 to 142 (FVSVTMVLLLSWVLVVLMNHF). The short motif at 154–157 (LVPT) is the Required for nuclear localization element.

As to quaternary structure, interacts with SUN1 and SUN2.

The protein localises to the nucleus membrane. This chain is Protein SINE4, found in Arabidopsis thaliana (Mouse-ear cress).